A 555-amino-acid polypeptide reads, in one-letter code: (+)-delta-cadinene synthase isozyme A (555 aa).

The disordered stretch occupies residues 1–22 (MASQASQVLASPHPAISSENRP). Mg(2+) contacts are provided by Asp-308, Asp-312, Asp-452, and Glu-456. Positions 308 to 312 (DDTYD) match the DDXXD motif motif.

The protein belongs to the terpene synthase family. The cofactor is Mg(2+).

The catalysed reaction is (2E,6E)-farnesyl diphosphate = (1S,8aR)-delta-cadinene + diphosphate. It participates in secondary metabolite biosynthesis; terpenoid biosynthesis. Responsible for the cyclization of trans,trans-farnesyl diphosphate (FPP) to (+)-delta cadinene. The sequence is that of (+)-delta-cadinene synthase isozyme A (CAD1-A) from Gossypium arboreum (Tree cotton).